The chain runs to 146 residues: Large ribosomal subunit protein uL11 (146 aa).

The protein belongs to the universal ribosomal protein uL11 family. In terms of assembly, part of the ribosomal stalk of the 50S ribosomal subunit. Interacts with L10 and the large rRNA to form the base of the stalk. L10 forms an elongated spine to which L12 dimers bind in a sequential fashion forming a multimeric L10(L12)X complex. Post-translationally, one or more lysine residues are methylated.

In terms of biological role, forms part of the ribosomal stalk which helps the ribosome interact with GTP-bound translation factors. In Blochmanniella floridana, this protein is Large ribosomal subunit protein uL11.